A 315-amino-acid polypeptide reads, in one-letter code: Thioredoxin reductase (315 aa).

34 to 41 (EGQKVGGQ) is a binding site for FAD. Cysteine 134 and cysteine 137 are joined by a disulfide. 282-291 (DIRVKSLRQV) serves as a coordination point for FAD.

The protein belongs to the class-II pyridine nucleotide-disulfide oxidoreductase family. Homodimer. FAD serves as cofactor.

It localises to the cytoplasm. It catalyses the reaction [thioredoxin]-dithiol + NADP(+) = [thioredoxin]-disulfide + NADPH + H(+). In Peptoclostridium acidaminophilum (Eubacterium acidaminophilum), this protein is Thioredoxin reductase (trxB).